The sequence spans 379 residues: Cytochrome b (379 aa).

4 helical membrane passes run 33–53, 77–98, 113–133, and 178–198; these read LGSL…FLAM, WTIR…YLHI, WNTG…GYVL, and FFTL…THLL. The heme b site is built by H83 and H97. Heme b is bound by residues H182 and H196. H201 provides a ligand contact to a ubiquinone. 4 helical membrane passes run 226–246, 288–308, 320–340, and 347–367; these read IKDI…TLLH, LGGV…PMTH, ISQC…WIGG, and FTTI…ILTP.

It belongs to the cytochrome b family. The cytochrome bc1 complex contains 11 subunits: 3 respiratory subunits (MT-CYB, CYC1 and UQCRFS1), 2 core proteins (UQCRC1 and UQCRC2) and 6 low-molecular weight proteins (UQCRH/QCR6, UQCRB/QCR7, UQCRQ/QCR8, UQCR10/QCR9, UQCR11/QCR10 and a cleavage product of UQCRFS1). This cytochrome bc1 complex then forms a dimer. The cofactor is heme b.

The protein localises to the mitochondrion inner membrane. In terms of biological role, component of the ubiquinol-cytochrome c reductase complex (complex III or cytochrome b-c1 complex) that is part of the mitochondrial respiratory chain. The b-c1 complex mediates electron transfer from ubiquinol to cytochrome c. Contributes to the generation of a proton gradient across the mitochondrial membrane that is then used for ATP synthesis. This is Cytochrome b (MT-CYB) from Bradypus tridactylus (Pale-throated three-toed sloth).